Consider the following 362-residue polypeptide: 2-aminoethylphosphonate--pyruvate transaminase (362 aa).

N6-(pyridoxal phosphate)lysine is present on Lys193.

Belongs to the class-V pyridoxal-phosphate-dependent aminotransferase family. PhnW subfamily. In terms of assembly, homodimer. The cofactor is pyridoxal 5'-phosphate.

The enzyme catalyses (2-aminoethyl)phosphonate + pyruvate = phosphonoacetaldehyde + L-alanine. Involved in phosphonate degradation. This chain is 2-aminoethylphosphonate--pyruvate transaminase, found in Bacteroides fragilis (strain YCH46).